The following is a 252-amino-acid chain: Zinc finger CCCH domain-containing protein 28 (252 aa).

Residues 1–21 (MSHRRDYGSDAVHVRITHDPP) show a composition bias toward basic and acidic residues. A disordered region spans residues 1-31 (MSHRRDYGSDAVHVRITHDPPPENCFPNSGD). C3H1-type zinc fingers lie at residues 71-99 (FFKT…HSAE) and 143-171 (NWKT…HGPS).

This chain is Zinc finger CCCH domain-containing protein 28, found in Arabidopsis thaliana (Mouse-ear cress).